Reading from the N-terminus, the 508-residue chain is Protein NODULATION SIGNALING PATHWAY 2 (508 aa).

A disordered region spans residues 75–98 (ITTTTTTTTTTDEEEEEMETTTTT). Residues 108–500 (VGDDSKGLKL…RRLLSASLWT (393 aa)) enclose the GRAS domain. The leucine repeat I (LRI) stretch occupies residues 115-190 (LKLVHLLMAG…NNHHHHNNNK (76 aa)). Residues 209 to 273 (FQLLQDMSPY…NNGPHLRITA (65 aa)) are VHIID. Residues 240 to 244 (VHVID) carry the VHIID motif. Residues 289–321 (ETGRRLTSFAASLGQPFSFHHCRLDSDETFRPS) are leucine repeat II (LRII). The PFYRE stretch occupies residues 331 to 422 (LVFNCMLNLP…RVFFGPRIAG (92 aa)). The segment at 425–500 (GRIYRTGGEE…RRLLSASLWT (76 aa)) is SAW.

The protein belongs to the GRAS family. Interacts with RAM1. Interacts with IPN2 and RAD1. In terms of tissue distribution, expressed in roots, shoots and leaves.

The protein localises to the nucleus membrane. It is found in the endoplasmic reticulum. Functionally, transcriptional regulator essential for Nod-factor-induced gene expression. Acts downstream of calcium spiking and DMI3, a calcium/calmodulin-dependent protein kinase (CCaMK). Transcription factor involved in the control of strigolactone biosynthesis in roots through the activation of the beta-carotene isomerase D27, which participates in a pathway leading to biosynthesis of strigolactones. The chain is Protein NODULATION SIGNALING PATHWAY 2 from Medicago truncatula (Barrel medic).